The chain runs to 419 residues: MDTIFAEATPPGRGGVSVVRLSGPKAHATLESLAGPVATPRMAALRALRDGDDLIDRALVIWFAEGHSFTGEEVAELHLHGAPVIASRLSQALLARGLRRAEAGEFTKRAFLNGRIDLAEAEGLADLLSAETEAQRKLAMRATEGELGRKADELRSKLIRAGALIEASIDFADEEVPDEVPEEALDLIKAVRSDIQGMLASYPATERLRQGYEVAIIGPPNAGKSTLLNRIGQREIALVSEIAGTTRDILELHTDLRGLPVTFLDTAGLRESSDPVEAMGVARAVQRAAEADLRIHLSVDGVPEETLVLGDIIVRSKADLGRGEETAISGLTGEGVAELLDLVYDRLRVRAADSGLVGHKRQAEALQRAVAALAIDDSLAPEFLAEALRQAAQALAMMVGRVGAEDYLDEIFSSFCIGK.

Positions 20, 76, and 115 each coordinate (6S)-5-formyl-5,6,7,8-tetrahydrofolate. The 138-residue stretch at 211–348 (GYEVAIIGPP…LLDLVYDRLR (138 aa)) folds into the TrmE-type G domain. N221 is a binding site for K(+). GTP contacts are provided by residues 221-226 (NAGKST), 240-246 (SEIAGTT), and 265-268 (DTAG). S225 provides a ligand contact to Mg(2+). K(+) contacts are provided by S240, I242, and T245. T246 contributes to the Mg(2+) binding site. (6S)-5-formyl-5,6,7,8-tetrahydrofolate is bound at residue K419.

Belongs to the TRAFAC class TrmE-Era-EngA-EngB-Septin-like GTPase superfamily. TrmE GTPase family. As to quaternary structure, homodimer. Heterotetramer of two MnmE and two MnmG subunits. K(+) serves as cofactor.

The protein localises to the cytoplasm. Its function is as follows. Exhibits a very high intrinsic GTPase hydrolysis rate. Involved in the addition of a carboxymethylaminomethyl (cmnm) group at the wobble position (U34) of certain tRNAs, forming tRNA-cmnm(5)s(2)U34. This chain is tRNA modification GTPase MnmE, found in Paracoccus denitrificans (strain Pd 1222).